The chain runs to 25 residues: Mu-conotoxin CnIIIB (25 aa).

Pyrrolidone carboxylic acid; partial is present on Q1. 3 disulfide bridges follow: C3-C15, C4-C21, and C10-C22.

The protein belongs to the conotoxin M superfamily. As to expression, expressed by the venom duct.

The protein resides in the secreted. Its function is as follows. Mu-conotoxins block voltage-gated sodium channels (Nav). This synthetic toxin blocks slightly but irreversibly tetrodotoxin-resistant VGSCs. The polypeptide is Mu-conotoxin CnIIIB (Conus consors (Singed cone)).